Here is a 461-residue protein sequence, read N- to C-terminus: Putative cytochrome P450 132 (461 aa).

Cysteine 409 serves as a coordination point for heme.

The protein belongs to the cytochrome P450 family. It depends on heme as a cofactor.

This is Putative cytochrome P450 132 (cyp132) from Mycobacterium tuberculosis (strain ATCC 25618 / H37Rv).